The sequence spans 416 residues: Formyl-CoA:oxalate CoA-transferase (416 aa).

Residues 17–18 (QS), Arg38, 72–75 (LNTK), 96–98 (NFH), His104, and 137–140 (KAYE) each bind CoA. The active-site Nucleophile is the Asp169. A substrate-binding site is contributed by 248 to 250 (GGQ). A CoA-binding site is contributed by 273–275 (QEQ).

The protein belongs to the CoA-transferase III family. Frc subfamily. Homodimer.

The enzyme catalyses formyl-CoA + oxalate = oxalyl-CoA + formate. It participates in metabolic intermediate degradation; oxalate degradation; CO(2) and formate from oxalate: step 1/2. Involved in the catabolism of oxalate and in the adapatation to low pH via the induction of the oxalate-dependent acid tolerance response (ATR). Catalyzes the transfer of the CoA moiety from formyl-CoA to oxalate. This Shigella boydii serotype 18 (strain CDC 3083-94 / BS512) protein is Formyl-CoA:oxalate CoA-transferase.